The following is a 687-amino-acid chain: Mu-like prophage FluMu transposase A (687 aa).

The region spanning 8–74 (THYSVYELAN…ELLLKTTPEQ (67 aa)) is the HTH Mu-type domain. Residues 398–417 (PIERAFSHGGLGDYVDKHLL) constitute a DNA-binding region (H-T-H motif).

This transposase is essential for integration, replication-transposition, and excision of Mu-like viral DNA. The polypeptide is Mu-like prophage FluMu transposase A (Haemophilus influenzae (strain ATCC 51907 / DSM 11121 / KW20 / Rd)).